The chain runs to 215 residues: Ribonuclease T (215 aa).

An Exonuclease domain is found at 20–194 (VVIDVETAGF…YDTLQTAKLF (175 aa)). Residues Asp-23, Glu-25, His-181, and Asp-186 each coordinate Mg(2+). The active-site Proton donor/acceptor is the His-181.

The protein belongs to the RNase T family. As to quaternary structure, homodimer. It depends on Mg(2+) as a cofactor.

Trims short 3' overhangs of a variety of RNA species, leaving a one or two nucleotide 3' overhang. Responsible for the end-turnover of tRNA: specifically removes the terminal AMP residue from uncharged tRNA (tRNA-C-C-A). Also appears to be involved in tRNA biosynthesis. The sequence is that of Ribonuclease T from Yersinia pseudotuberculosis serotype I (strain IP32953).